Reading from the N-terminus, the 396-residue chain is Flavohemoprotein (396 aa).

The Globin domain maps to 1 to 136; it reads MLDAQTIATV…LANVFINREA (136 aa). Position 85 (histidine 85) interacts with heme b. Active-site charge relay system residues include tyrosine 95 and glutamate 135. Positions 147–396 are reductase; sequence GGWEGTRDFR…YECFGPHKVL (250 aa). One can recognise an FAD-binding FR-type domain in the interval 150 to 255; it reads EGTRDFRIVA…VAPAGDFFMA (106 aa). FAD-binding positions include tyrosine 188 and 204 to 207; that span reads RQYS. Residue 268–273 coordinates NADP(+); that stretch reads GVGQTP. 389 to 392 serves as a coordination point for FAD; the sequence is CFGP.

Belongs to the globin family. Two-domain flavohemoproteins subfamily. The protein in the C-terminal section; belongs to the flavoprotein pyridine nucleotide cytochrome reductase family. In terms of assembly, monomer. The cofactor is FAD. Heme b is required as a cofactor.

The protein resides in the cytoplasm. The enzyme catalyses 2 nitric oxide + NADPH + 2 O2 = 2 nitrate + NADP(+) + H(+). It carries out the reaction 2 nitric oxide + NADH + 2 O2 = 2 nitrate + NAD(+) + H(+). In terms of biological role, is involved in NO detoxification in an aerobic process, termed nitric oxide dioxygenase (NOD) reaction that utilizes O(2) and NAD(P)H to convert NO to nitrate, which protects the bacterium from various noxious nitrogen compounds. Therefore, plays a central role in the inducible response to nitrosative stress. Functionally, in the presence of oxygen and NADH, HMP has NADH oxidase activity, which leads to the generation of superoxide and H(2)O(2), both in vitro and in vivo, and it has been suggested that HMP might act as an amplifier of superoxide stress. Under anaerobic conditions, HMP also exhibits nitric oxide reductase and FAD reductase activities. However, all these reactions are much lower than NOD activity. Its function is as follows. Various electron acceptors are also reduced by HMP in vitro, including dihydropterine, ferrisiderophores, ferric citrate, cytochrome c, nitrite, S-nitrosoglutathione, and alkylhydroperoxides. However, it is unknown if these reactions are of any biological significance in vivo. The protein is Flavohemoprotein (hmp) of Escherichia coli (strain K12).